The chain runs to 221 residues: GTP cyclohydrolase III (221 aa).

Belongs to the archaeal-type GTP cyclohydrolase family.

The enzyme catalyses GTP + 3 H2O = 2-amino-5-formylamino-6-(5-phospho-D-ribosylamino)pyrimidin-4(3H)-one + 2 phosphate + 2 H(+). In terms of biological role, catalyzes the formation of 2-amino-5-formylamino-6-ribofuranosylamino-4(3H)-pyrimidinone ribonucleotide monophosphate and inorganic phosphate from GTP. Also has an independent pyrophosphate phosphohydrolase activity. In Pyrobaculum islandicum (strain DSM 4184 / JCM 9189 / GEO3), this protein is GTP cyclohydrolase III.